The primary structure comprises 1312 residues: MKHEKQQRFSIRKYAVGAASVLIGFAFQAQTVAADGVTPTTTENQPTIHTVSDSPQSSENRTEETPKAVLQPEAPKTVETETPATDKVASLPKTEEKPQEEVSSTPSDKAEVVTPTSAEKETANKKAEEASPKKEEAKEVDSKESNTDKTDKDKPAKKDEAKAEADKPATEAGKERAATVNEKLAKKKIVSIDAGRKYFSPEQLKEIIDKAKHYGYTDLHLLVGNDGLRFMLDDMSITANGKTYASDDVKRAIEKGTNDYYNDPNGNHLTESQMTDLINYAKDKGIGLIPTVNSPGHMDAILNAMKELGIQNPNFSYFGKKSARTVDLDNEQAVAFTKALIDKYAAYFAKKTEIFNIGLDEYANDATDAKGWSVLQADKYYPNEGYPVKGYEKFIAYANDLARIVKSHGLKPMAFNDGIYYNSDTSFGSFDKDIIVSMWTGGWGGYDVASSKLLAEKGHQILNTNDAWYYVLGRNADGQGWYNLDQGLNGIKNTPITSVPKTEGADIPIIGGMVAAWADTPSARYSPSRLFKLMRHFANANAEYFAADYESAEQALNEVPKDLNRYTAESVTAVKEAEKAIRSLDSNLSRAQQDTIDQAIAKLQETVNNLTLTPEAQKEEEAKREVEKLAKNKVISIDAGRKYFTLNQLKRIVDKASELGYSDVHLLLGNDGLRFLLDDMTITANGKTYASDDVKKAIIEGTKAYYDDPNGTALTQAEVTELIEYAKSKDIGLIPAINSPGHMDAMLVAMEKLGIKNPQAHFDKVSKTTMDLKNEEAMNFVKALIGKYMDFFAGKTKIFNFGTDEYANDATSAQGWYYLKWYQLYGKFAEYANTLAAMAKERGLQPMAFNDGFYYEDKDDVQFDKDVLISYWSKGWWGYNLASPQYLASKGYKFLNTNGDWYYILGQKPEDGGGFLKKAIENTGKTPFNQLASTKYPEVDLPTVGSMLSIWADRPSAEYKEEEIFELMTAFADHNKDYFRANYNALREELAKIPTNLEGYSKESLEALDAAKTALNYNLNRNKQAELDTLVANLKAALQGLKPAVTHSGSLDENEVAANVETRPELITRTEEIPFEVIKKENPNLPAGQENIITAGVKGERTHYISVLTENGKTTETVLDSQVTKEVINQVVEVGAPVTHKGDESGLAPTTEVKPRLDIQEEEIPFTTVTCENPLLLKGKTQVITKGVNGHRSNFYSVSTSADGKEVKTLVNSVVAQEAVTQIVEVGTMVTHVGDENGQAAIAEEKPKLEIPSQPAPSTAPAEESKVLPQDPAPVVTEKKLPETGTHDSAGLVVAGLMSTLAAYGLTKRKED.

The N-terminal stretch at 1–33 (MKHEKQQRFSIRKYAVGAASVLIGFAFQAQTVA) is a signal peptide. A compositionally biased stretch (polar residues) spans 38–59 (TPTTTENQPTIHTVSDSPQSSE). A disordered region spans residues 38-178 (TPTTTENQPT…ATEAGKERAA (141 aa)). Basic and acidic residues predominate over residues 118–177 (AEKETANKKAEEASPKKEEAKEVDSKESNTDKTDKDKPAKKDEAKAEADKPATEAGKERA). Catalytic domain regions lie at residues 176–616 (RAAT…TPEA) and 621–1046 (EAKR…PAVT). G5 domains lie at 1059-1138 (NVET…GAPV) and 1150-1230 (TTEV…GTMV). The tract at residues 1244-1290 (EEKPKLEIPSQPAPSTAPAEESKVLPQDPAPVVTEKKLPETGTHDSA) is disordered. The segment covering 1277-1286 (TEKKLPETGT) has biased composition (basic and acidic residues). Residues 1281-1285 (LPETG) carry the LPXTG sorting signal motif. T1284 carries the post-translational modification Pentaglycyl murein peptidoglycan amidated threonine. A propeptide spans 1285 to 1312 (GTHDSAGLVVAGLMSTLAAYGLTKRKED) (removed by sortase).

It belongs to the glycosyl hydrolase 20 family.

It localises to the secreted. The protein localises to the cell wall. It catalyses the reaction Hydrolysis of terminal non-reducing N-acetyl-D-hexosamine residues in N-acetyl-beta-D-hexosaminides.. This is Beta-N-acetylhexosaminidase (strH) from Streptococcus pneumoniae serotype 4 (strain ATCC BAA-334 / TIGR4).